We begin with the raw amino-acid sequence, 765 residues long: Nucleolar transcription factor 1 (765 aa).

At Met1 the chain carries N-acetylmethionine. Residues 1–21 (MNGEADCPTDLEMAAPKGQDR) form a disordered region. 2 DNA-binding regions (HMG box) span residues 112–180 (PKKP…ARFR) and 196–264 (PEKP…RDYI). The residue at position 201 (Thr201) is a Phosphothreonine. Phosphoserine occurs at positions 273, 336, and 364. Positions 298-362 (TKPPPNSYSL…DYEVELLRFL (65 aa)) form a DNA-binding region, HMG box 3. Residues 370-379 (QQRVLGEEKM) show a composition bias toward basic and acidic residues. The segment at 370 to 411 (QQRVLGEEKMLNINKKQTTSPASKKPSQEGGKGGSEKPKRPV) is disordered. Phosphoserine is present on residues Ser389, Ser412, Ser433, Ser435, Ser484, Ser495, Ser546, Ser584, and Ser638. 3 consecutive DNA-binding regions (HMG box) follow at residues 407–475 (PKRP…GGER), 482–549 (PESP…SEMR), and 568–634 (KKPP…DLWV). The disordered stretch occupies residues 456 to 487 (YKAREAALKAQSERKPGGEREDRGKLPESPKR). Positions 457-487 (KAREAALKAQSERKPGGEREDRGKLPESPKR) are enriched in basic and acidic residues. A disordered region spans residues 546-576 (SEMRAPPAATNSSKKMKFQGEPKKPPMNGYQ). The segment at 649–765 (ISNKRKNMTK…SGDSSDSGSN (117 aa)) is disordered. Residues 664-674 (PKSSRTTLQSK) are compositionally biased toward polar residues. Over residues 677 to 746 (SEEDDDEEEE…DDDEDEDNES (70 aa)) the composition is skewed to acidic residues. Positions 747–765 (EGSSSSSSSSGDSSDSGSN) are enriched in low complexity.

In terms of assembly, homodimer. Part of Pol I pre-initiation complex (PIC), in which Pol I core assembles with RRN3 and promoter-bound UTBF and SL1/TIF-IB complex. Interacts with TOP2A in the context of Pol I complex. Interacts with TBP. Interacts with TAF1A. Interacts with RASL11A. Binds to IRS1 and PIK3CA. Interacts with DHX33. Interacts with PHF6. Interacts with CEBPA (isoform 1 and isoform 4). Interacts with DDX11. Interacts with NOP53. Interacts with ALKBH2. Post-translationally, phosphorylated and activated by PIK3CA.

The protein localises to the nucleus. It localises to the nucleolus. In terms of biological role, recognizes the ribosomal RNA gene promoter and activates transcription mediated by RNA polymerase I through cooperative interactions with the transcription factor SL1/TIF-IB complex. It binds specifically to the upstream control element. In Mus musculus (Mouse), this protein is Nucleolar transcription factor 1 (Ubtf).